A 308-amino-acid polypeptide reads, in one-letter code: Acetyl-coenzyme A carboxylase carboxyl transferase subunit beta 1 (308 aa).

In terms of domain architecture, CoA carboxyltransferase N-terminal spans 25–294 (VWTKCTSCEQ…PMVVSVNESP (270 aa)). Cys-29, Cys-32, Cys-48, and Cys-51 together coordinate Zn(2+). Residues 29 to 51 (CTSCEQVLYHAELERNLEVCPKC) form a C4-type zinc finger. The disordered stretch occupies residues 289-308 (SVNESPNEEPYSVPEADEKG).

Belongs to the AccD/PCCB family. In terms of assembly, acetyl-CoA carboxylase is a heterohexamer composed of biotin carboxyl carrier protein (AccB), biotin carboxylase (AccC) and two subunits each of ACCase subunit alpha (AccA) and ACCase subunit beta (AccD). The cofactor is Zn(2+).

The protein localises to the cytoplasm. It carries out the reaction N(6)-carboxybiotinyl-L-lysyl-[protein] + acetyl-CoA = N(6)-biotinyl-L-lysyl-[protein] + malonyl-CoA. The protein operates within lipid metabolism; malonyl-CoA biosynthesis; malonyl-CoA from acetyl-CoA: step 1/1. In terms of biological role, component of the acetyl coenzyme A carboxylase (ACC) complex. Biotin carboxylase (BC) catalyzes the carboxylation of biotin on its carrier protein (BCCP) and then the CO(2) group is transferred by the transcarboxylase to acetyl-CoA to form malonyl-CoA. The chain is Acetyl-coenzyme A carboxylase carboxyl transferase subunit beta 1 from Vibrio campbellii (strain ATCC BAA-1116).